The primary structure comprises 269 residues: MSDLPGIVVTGASGRMGQMLMKTVLASGRARLVGAVERPGSDWVGRDAGAAMGGAAIGVTVTDDPLAAFAQAQAVIDFTAPEATVQFAELAAQARAVHVIGTTGLEPAHLERLAWAAHHAVIVRAGNMSLGVNLLTRLTQKVAEALDEDWDIEVVEAHHRMKVDAPSGTALMLGEAAARGRGVDLAQARVSGRDGITGPRAPGSIGFSAIRGGDIVGEHDVIFAAAGERITLRHVATDRAIFARGALKAALWGQDRRPGQYDMMDVLGL.

NAD(+) contacts are provided by residues 11–16 (GASGRM) and E37. R38 contributes to the NADP(+) binding site. NAD(+)-binding positions include 101–103 (GTT) and 125–128 (AGNM). The active-site Proton donor/acceptor is the H158. H159 is a (S)-2,3,4,5-tetrahydrodipicolinate binding site. K162 serves as the catalytic Proton donor. A (S)-2,3,4,5-tetrahydrodipicolinate-binding site is contributed by 168–169 (GT).

Belongs to the DapB family.

The protein resides in the cytoplasm. It carries out the reaction (S)-2,3,4,5-tetrahydrodipicolinate + NAD(+) + H2O = (2S,4S)-4-hydroxy-2,3,4,5-tetrahydrodipicolinate + NADH + H(+). The enzyme catalyses (S)-2,3,4,5-tetrahydrodipicolinate + NADP(+) + H2O = (2S,4S)-4-hydroxy-2,3,4,5-tetrahydrodipicolinate + NADPH + H(+). The protein operates within amino-acid biosynthesis; L-lysine biosynthesis via DAP pathway; (S)-tetrahydrodipicolinate from L-aspartate: step 4/4. In terms of biological role, catalyzes the conversion of 4-hydroxy-tetrahydrodipicolinate (HTPA) to tetrahydrodipicolinate. The chain is 4-hydroxy-tetrahydrodipicolinate reductase from Cereibacter sphaeroides (strain KD131 / KCTC 12085) (Rhodobacter sphaeroides).